A 298-amino-acid polypeptide reads, in one-letter code: Nucleotide-binding protein MAV_3359 (298 aa).

An ATP-binding site is contributed by 18 to 25 (GLSGAGRG). 69–72 (DVRS) contacts GTP.

This sequence belongs to the RapZ-like family.

Its function is as follows. Displays ATPase and GTPase activities. The chain is Nucleotide-binding protein MAV_3359 from Mycobacterium avium (strain 104).